Reading from the N-terminus, the 547-residue chain is Chaperonin GroEL (547 aa).

ATP-binding positions include 30-33, K51, 87-91, G415, and D496; these read TLGP and DGTTT.

Belongs to the chaperonin (HSP60) family. Forms a cylinder of 14 subunits composed of two heptameric rings stacked back-to-back. Interacts with the co-chaperonin GroES.

It is found in the cytoplasm. It carries out the reaction ATP + H2O + a folded polypeptide = ADP + phosphate + an unfolded polypeptide.. Its function is as follows. Together with its co-chaperonin GroES, plays an essential role in assisting protein folding. The GroEL-GroES system forms a nano-cage that allows encapsulation of the non-native substrate proteins and provides a physical environment optimized to promote and accelerate protein folding. The protein is Chaperonin GroEL of Actinobacillus succinogenes (strain ATCC 55618 / DSM 22257 / CCUG 43843 / 130Z).